We begin with the raw amino-acid sequence, 181 residues long: Protein GrpE (181 aa).

Positions 1–13 (MENTQENPATQSA) are enriched in polar residues. The disordered stretch occupies residues 1 to 34 (MENTQENPATQSAEDIGSAKQAAQGAAPAAEAAD). The segment covering 19 to 34 (AKQAAQGAAPAAEAAD) has biased composition (low complexity).

It belongs to the GrpE family. In terms of assembly, homodimer.

The protein resides in the cytoplasm. In terms of biological role, participates actively in the response to hyperosmotic and heat shock by preventing the aggregation of stress-denatured proteins, in association with DnaK and GrpE. It is the nucleotide exchange factor for DnaK and may function as a thermosensor. Unfolded proteins bind initially to DnaJ; upon interaction with the DnaJ-bound protein, DnaK hydrolyzes its bound ATP, resulting in the formation of a stable complex. GrpE releases ADP from DnaK; ATP binding to DnaK triggers the release of the substrate protein, thus completing the reaction cycle. Several rounds of ATP-dependent interactions between DnaJ, DnaK and GrpE are required for fully efficient folding. In Burkholderia vietnamiensis (strain G4 / LMG 22486) (Burkholderia cepacia (strain R1808)), this protein is Protein GrpE.